Here is a 196-residue protein sequence, read N- to C-terminus: ATP-dependent Clp protease proteolytic subunit (196 aa).

Ser101 serves as the catalytic Nucleophile. His126 is a catalytic residue.

This sequence belongs to the peptidase S14 family. Component of the chloroplastic Clp protease core complex.

The protein localises to the plastid. Its subcellular location is the chloroplast stroma. The enzyme catalyses Hydrolysis of proteins to small peptides in the presence of ATP and magnesium. alpha-casein is the usual test substrate. In the absence of ATP, only oligopeptides shorter than five residues are hydrolyzed (such as succinyl-Leu-Tyr-|-NHMec, and Leu-Tyr-Leu-|-Tyr-Trp, in which cleavage of the -Tyr-|-Leu- and -Tyr-|-Trp bonds also occurs).. Its function is as follows. Cleaves peptides in various proteins in a process that requires ATP hydrolysis. Has a chymotrypsin-like activity. Plays a major role in the degradation of misfolded proteins. This chain is ATP-dependent Clp protease proteolytic subunit, found in Pleurastrum terricola (Filamentous green alga).